The primary structure comprises 831 residues: MKISRRDFIKQTAITATASVAGVTLPAGAANFVTDSEVTKLKWSKAPCRFCGTGCGVTVAVKDNKVVATQGDPQAEVNKGLNCVKGYFLSKIMYGQDRLTRPLMRMKNGKYDKNGDFAPVTWDQAFDEMERQFKRVLKEKGPTAVGMFGSGQWTVWEGYAAAKLYKAGFRSNNIDPNARHCMASAAAGFMRTFGMDEPMGCYDDFEAADAFVLWGSNMAEMHPILWTRVTDRRLSHPKTRVVVLSTFTHRCFDLADIGIIFKPQTDLAMLNYIANYIIRNNKVNKDFVNKHTVFKEGVTDIGYGLRPDHPLQKAAKNASDPGAAKVITFDEFAKFVSKYDADYVSKLSAVPKAKLDQLAELYADPNIKVMSLWTMGFNQHTRGTWANNMVYNLHLLTGKIATPGNSPFSLTGQPSACGTAREVGTFSHRLPADMVVTNPKHREEAERIWKLPPGTIPDKPGYDAVLQNRMLKDGKLNAYWVQVNNNMQAAANLMEEGLPGYRNPANFIVVSDAYPTVTALAADLVLPSAMWVEKEGAYGNAERRTQFWHQLVDAPGEARSDLWQLVEFAKRFKVEEVWPPELIAKKPEYKGKTLYDVLYRNGQVDKFPLKDVNAEYHNAEAKAFGFYLQKGLFEEYATFGRGHGHDLAPFDAYHEARGLRWPVVNGKETRWRYREGSDPYVKAGTGFQFYGNPDGKAVIFALPYEPPAESPDKEYPYWLVTGRVLEHWHSGSMTRRVPELYRSFPNAVVFMHPEDAKALGLRRGVEVEVVSRRGRMRSRIETRGRDAPPRGLVFVPWFDASQLINKVTLDATCPISLQTDFKKCAVKIVKV.

The segment at residues 1-29 is a signal peptide (tat-type signal); sequence MKISRRDFIKQTAITATASVAGVTLPAGA. In terms of domain architecture, 4Fe-4S Mo/W bis-MGD-type spans 41-97; sequence LKWSKAPCRFCGTGCGVTVAVKDNKVVATQGDPQAEVNKGLNCVKGYFLSKIMYGQD. Cys48, Cys51, Cys55, and Cys83 together coordinate [4Fe-4S] cluster. Mo-bis(molybdopterin guanine dinucleotide) is bound by residues Lys85, Gln152, Asn177, Cys181, 214–221, 245–249, 264–266, Met375, Gln379, Asn485, 511–512, Lys534, Asp561, and 721–730; these read WGSNMAEM, STFTH, QTD, SD, and TGRVLEHWHS. Trp797 is a substrate binding site. Positions 805 and 822 each coordinate Mo-bis(molybdopterin guanine dinucleotide).

Belongs to the prokaryotic molybdopterin-containing oxidoreductase family. NasA/NapA/NarB subfamily. As to quaternary structure, component of the periplasmic nitrate reductase NapAB complex composed of NapA and NapB. [4Fe-4S] cluster is required as a cofactor. Requires Mo-bis(molybdopterin guanine dinucleotide) as cofactor. Predicted to be exported by the Tat system. The position of the signal peptide cleavage has been experimentally proven.

It is found in the periplasm. The catalysed reaction is 2 Fe(II)-[cytochrome] + nitrate + 2 H(+) = 2 Fe(III)-[cytochrome] + nitrite + H2O. Its function is as follows. Catalytic subunit of the periplasmic nitrate reductase complex NapAB. Receives electrons from NapB and catalyzes the reduction of nitrate to nitrite. In Cupriavidus necator (strain ATCC 17699 / DSM 428 / KCTC 22496 / NCIMB 10442 / H16 / Stanier 337) (Ralstonia eutropha), this protein is Periplasmic nitrate reductase.